Reading from the N-terminus, the 181-residue chain is Inner membrane-spanning protein YciB (181 aa).

5 consecutive transmembrane segments (helical) span residues 10 to 30, 50 to 70, 72 to 92, 118 to 138, and 148 to 168; these read LVIF…GALI, MHLI…VFHD, AFIK…LGIS, ITWY…YVAF, and FKVF…VFYL.

It belongs to the YciB family.

It is found in the cell inner membrane. In terms of biological role, plays a role in cell envelope biogenesis, maintenance of cell envelope integrity and membrane homeostasis. The polypeptide is Inner membrane-spanning protein YciB (Shewanella putrefaciens (strain CN-32 / ATCC BAA-453)).